Reading from the N-terminus, the 294-residue chain is Indole-3-glycerol phosphate synthase (294 aa).

Belongs to the TrpC family.

The catalysed reaction is 1-(2-carboxyphenylamino)-1-deoxy-D-ribulose 5-phosphate + H(+) = (1S,2R)-1-C-(indol-3-yl)glycerol 3-phosphate + CO2 + H2O. Its pathway is amino-acid biosynthesis; L-tryptophan biosynthesis; L-tryptophan from chorismate: step 4/5. The polypeptide is Indole-3-glycerol phosphate synthase (Crocosphaera subtropica (strain ATCC 51142 / BH68) (Cyanothece sp. (strain ATCC 51142))).